The chain runs to 1851 residues: Protein lap4 (1851 aa).

LRR repeat units follow at residues Thr38–Leu59, Arg61–Phe82, Asn84–Leu105, Ser107–Leu128, Asn130–Thr152, Gln153–Leu174, Lys176–Leu197, Gly199–Leu220, Lys222–Leu243, Ser245–Ser267, Arg268–Cys289, Asn291–Met312, Lys314–Cys335, Asn337–Cys358, Val360–Gln382, and Leu383–Thr403. 3 disordered regions span residues Pro427 to Lys474, Val584 to Leu641, and Ser656 to Leu719. Phosphoserine is present on residues Ser433 and Ser435. Residues Phe438–Pro461 show a composition bias toward basic and acidic residues. The stretch at Lys471–Asn492 forms a coiled coil. Acidic residues predominate over residues Glu589–Glu601. The span at Arg620–Gln639 shows a compositional bias: basic residues. Positions Ser656 to Val672 are enriched in polar residues. Over residues Ile676–Gln686 the composition is skewed to acidic residues. Residues Glu677–Gln693 adopt a coiled-coil conformation. Phosphoserine occurs at positions 700, 702, and 705. A PDZ 1 domain is found at Glu731 to Val818. Residues Ser834 and Ser837 each carry the phosphoserine modification. Residues His929–Tyr1019 form the PDZ 2 domain. A phosphoserine mark is found at Ser1031 and Ser1041. Residues Leu1067–Leu1150 are disordered. 2 stretches are compositionally biased toward polar residues: residues Ala1080 to Phe1097 and Gly1132 to Pro1149. PDZ domains are found at residues Glu1239–Pro1329 and Glu1336–Tyr1428. Positions Asn1448–Gly1467 are enriched in polar residues. The tract at residues Asn1448–Glu1485 is disordered. Residues Ser1468–Ser1478 are compositionally biased toward low complexity. Phosphoserine is present on residues Ser1475, Ser1477, and Ser1478. A Phosphothreonine modification is found at Thr1599. Positions Ala1647–Pro1669 are enriched in low complexity. 2 disordered regions span residues Ala1647–Ser1751 and Leu1772–Ser1851. Over residues Val1725–Ser1751 the composition is skewed to basic and acidic residues. Residues Leu1753–Lys1790 adopt a coiled-coil conformation. Residues Asp1807–Glu1816 show a composition bias toward acidic residues. Residues His1831–Ser1851 show a composition bias toward basic and acidic residues.

Belongs to the LAP (LRR and PDZ) protein family. During germ band extension, expression of isoform A occurs predominantly in neuroblasts derived from the neuro-ectoderm and later is restricted to CNS neurons and pole cells. Isoform C is strongly expressed in PNS and a subset of CNS neurons. In the adult, expressed in third antennal segment and maxillary palps, major olfactory organs and in Johnstons organ in the second antennal segment. Expression is also observed in cortical regions of the brain. Isoforms expressed in epithelia are coexpressed with dlg1 throughout development.

It localises to the cytoplasm. Its subcellular location is the apicolateral cell membrane. It is found in the cell junction. The protein resides in the septate junction. Required for polarization of the embryonic, imaginal disk and follicular epithelia. Specifically restricts apical membrane determinants to the apical cell surface; acts to exclude crb from the basolateral domain and define adherens junction position. Regulates cellular growth and differentiation; acts as a tumor suppressor. Essential for odor guided behavior. This Drosophila melanogaster (Fruit fly) protein is Protein lap4.